The primary structure comprises 347 residues: Photosystem II assembly protein Ycf48 (347 aa).

The N-terminal stretch at 1–38 (MFAKQIDIHWQKMKGIKFLHWLLGTVLLWVSLSTPALA) is a signal peptide. The Arg-rich patch signature appears at 202–226 (RGSFYSTWEPGQTAWEPHNRTTSRR).

Belongs to the Ycf48 family. Interacts with the D1 protein (crystallized with PsbA1 or PsbA3), via the latter's C-terminal prepropeptide, may interact with parts of the mature D1 protein as well.

The protein localises to the cellular thylakoid lumen. Its function is as follows. A factor required for optimal assembly of photosystem II (PSII), acting in the early stages of PSII assembly. Also plays a role in replacement of photodamaged D1 (psbA). Assists YidC in synthesis of chlorophyll-binding proteins. The chain is Photosystem II assembly protein Ycf48 from Thermosynechococcus vestitus (strain NIES-2133 / IAM M-273 / BP-1).